The following is a 628-amino-acid chain: Probable alpha-L-arabinofuranosidase A (628 aa).

An N-terminal signal peptide occupies residues Met-1 to Gly-25. 10 N-linked (GlcNAc...) asparagine glycosylation sites follow: Asn-36, Asn-51, Asn-74, Asn-152, Asn-171, Asn-260, Asn-359, Asn-440, Asn-493, and Asn-610.

This sequence belongs to the glycosyl hydrolase 51 family.

The protein localises to the secreted. The enzyme catalyses Hydrolysis of terminal non-reducing alpha-L-arabinofuranoside residues in alpha-L-arabinosides.. It functions in the pathway glycan metabolism; L-arabinan degradation. Its function is as follows. Alpha-L-arabinofuranosidase involved in the degradation of arabinoxylan, a major component of plant hemicellulose. Acts only on small linear 1,5-alpha-linked L-arabinofuranosyl oligosaccharides. This chain is Probable alpha-L-arabinofuranosidase A (abfA), found in Aspergillus niger (strain ATCC MYA-4892 / CBS 513.88 / FGSC A1513).